A 107-amino-acid chain; its full sequence is MKYLAAYALISLSGKTPSKADVEAVLKAAGVPVDSSRVEELLSEVEGKDFDALCAEGKAKLVGGVTAGGAAPSGGAAAHAAAASAPAAAAAEAEEEDDDDMGFGLFD.

The interval 86 to 107 is disordered; the sequence is PAAAAAEAEEEDDDDMGFGLFD. Positions 92-101 are enriched in acidic residues; sequence EAEEEDDDDM.

The protein belongs to the eukaryotic ribosomal protein P1/P2 family. As to quaternary structure, P1 and P2 exist as dimers at the large ribosomal subunit. Phosphorylated.

Plays an important role in the elongation step of protein synthesis. The sequence is that of Large ribosomal subunit protein P2 from Trypanosoma brucei brucei.